Here is a 537-residue protein sequence, read N- to C-terminus: Chaperonin GroEL 1 (537 aa).

ATP-binding positions include 29–32 (TLGP), 86–90 (DGTTT), glycine 413, and aspartate 494.

Belongs to the chaperonin (HSP60) family. In terms of assembly, forms a cylinder of 14 subunits composed of two heptameric rings stacked back-to-back. Interacts with the co-chaperonin GroES.

Its subcellular location is the cytoplasm. It catalyses the reaction ATP + H2O + a folded polypeptide = ADP + phosphate + an unfolded polypeptide.. Its function is as follows. Together with its co-chaperonin GroES, plays an essential role in assisting protein folding. The GroEL-GroES system forms a nano-cage that allows encapsulation of the non-native substrate proteins and provides a physical environment optimized to promote and accelerate protein folding. This Mycobacterium leprae (strain TN) protein is Chaperonin GroEL 1.